A 353-amino-acid polypeptide reads, in one-letter code: Serine/threonine-protein kinase SRK2G (353 aa).

One can recognise a Protein kinase domain in the interval 4-260 (YDVVKDLGAG…LKEIKNHPWY (257 aa)). ATP contacts are provided by residues 10–18 (LGAGNFGVA) and Lys-33. Asp-123 serves as the catalytic Proton acceptor. The tract at residues 299–353 (RNPAPSTSAVKSSGSGADEEEEEDVEAEVEEEEDDEDEYEKHVKEAQSCQESDKA) is disordered. Positions 302–313 (APSTSAVKSSGS) are enriched in polar residues. Residues 315-336 (ADEEEEEDVEAEVEEEEDDEDE) are compositionally biased toward acidic residues. The segment covering 337–353 (YEKHVKEAQSCQESDKA) has biased composition (basic and acidic residues).

The protein belongs to the protein kinase superfamily. Ser/Thr protein kinase family. As to expression, expressed in seedlings.

Its subcellular location is the nucleus. The catalysed reaction is L-seryl-[protein] + ATP = O-phospho-L-seryl-[protein] + ADP + H(+). It catalyses the reaction L-threonyl-[protein] + ATP = O-phospho-L-threonyl-[protein] + ADP + H(+). This chain is Serine/threonine-protein kinase SRK2G (SRK2G), found in Arabidopsis thaliana (Mouse-ear cress).